Here is a 762-residue protein sequence, read N- to C-terminus: 5-methyltetrahydropteroyltriglutamate--homocysteine methyltransferase (762 aa).

Residues 17–20 (REWK) and Lys-111 contribute to the 5-methyltetrahydropteroyltri-L-glutamate site. L-homocysteine-binding positions include 435-437 (IGS) and Glu-488. Residues 435 to 437 (IGS) and Glu-488 each bind L-methionine. 5-methyltetrahydropteroyltri-L-glutamate is bound by residues 519-520 (RC) and Trp-565. Asp-603 lines the L-homocysteine pocket. Residue Asp-603 coordinates L-methionine. Glu-609 is a binding site for 5-methyltetrahydropteroyltri-L-glutamate. 3 residues coordinate Zn(2+): His-645, Cys-647, and Glu-669. The Proton donor role is filled by His-698. Cys-730 is a Zn(2+) binding site.

The protein belongs to the vitamin-B12 independent methionine synthase family. The cofactor is Zn(2+).

It carries out the reaction 5-methyltetrahydropteroyltri-L-glutamate + L-homocysteine = tetrahydropteroyltri-L-glutamate + L-methionine. Its pathway is amino-acid biosynthesis; L-methionine biosynthesis via de novo pathway; L-methionine from L-homocysteine (MetE route): step 1/1. Functionally, catalyzes the transfer of a methyl group from 5-methyltetrahydrofolate to homocysteine resulting in methionine formation. The sequence is that of 5-methyltetrahydropteroyltriglutamate--homocysteine methyltransferase from Bacillus anthracis (strain CDC 684 / NRRL 3495).